Here is a 282-residue protein sequence, read N- to C-terminus: MAKLCCFGSSDYDLVVGRASTSSGKGRNNDGEIKFGYSLVKGKANHPMEDYHVSKFVKIDGNELGLFAIYDGHLGERVPAYLQKHLFSNILKEEQFRYDPQRSIIAAYEKTDQAILSHSSDLGRGGSTAVTAILMNGRRLWVANVGDSRAVLSQGGQAIQMTIDHEPHTERLSIEGKGGFVSNMPGDVPRVNGQLAVSRAFGDKSLKTHLRSDPDVKDSSIDDHTDVLVLASDGLWKVMANQEAIDIARRIKDPLKAAKELTTEALRRDSKDDISCIVVRLR.

The PPM-type phosphatase domain maps to 34-281 (KFGYSLVKGK…DDISCIVVRL (248 aa)). Mn(2+) is bound by residues Asp-71, Gly-72, Asp-233, and Asp-272.

Belongs to the PP2C family. Mg(2+) serves as cofactor. Mn(2+) is required as a cofactor.

The catalysed reaction is O-phospho-L-seryl-[protein] + H2O = L-seryl-[protein] + phosphate. It catalyses the reaction O-phospho-L-threonyl-[protein] + H2O = L-threonyl-[protein] + phosphate. The protein is Probable protein phosphatase 2C 10 of Arabidopsis thaliana (Mouse-ear cress).